Reading from the N-terminus, the 320-residue chain is tRNA N6-adenosine threonylcarbamoyltransferase (320 aa).

2 residues coordinate Fe cation: H114 and H118. Substrate is bound by residues 136–140 (VVSGG), D169, G182, D186, and N273. D297 serves as a coordination point for Fe cation.

The protein belongs to the KAE1 / TsaD family. Fe(2+) serves as cofactor.

It localises to the cytoplasm. The enzyme catalyses L-threonylcarbamoyladenylate + adenosine(37) in tRNA = N(6)-L-threonylcarbamoyladenosine(37) in tRNA + AMP + H(+). In terms of biological role, required for the formation of a threonylcarbamoyl group on adenosine at position 37 (t(6)A37) in tRNAs that read codons beginning with adenine. Is involved in the transfer of the threonylcarbamoyl moiety of threonylcarbamoyl-AMP (TC-AMP) to the N6 group of A37, together with TsaE and TsaB. TsaD likely plays a direct catalytic role in this reaction. This chain is tRNA N6-adenosine threonylcarbamoyltransferase, found in Ureaplasma urealyticum serovar 10 (strain ATCC 33699 / Western).